We begin with the raw amino-acid sequence, 291 residues long: Urease accessory protein UreD (291 aa).

This sequence belongs to the UreD family. In terms of assembly, ureD, UreF and UreG form a complex that acts as a GTP-hydrolysis-dependent molecular chaperone, activating the urease apoprotein by helping to assemble the nickel containing metallocenter of UreC. The UreE protein probably delivers the nickel.

It is found in the cytoplasm. Functionally, required for maturation of urease via the functional incorporation of the urease nickel metallocenter. The chain is Urease accessory protein UreD from Acinetobacter baumannii (strain ACICU).